We begin with the raw amino-acid sequence, 444 residues long: Tubulin beta chain (444 aa).

Residues glutamine 11, glutamate 69, serine 138, glycine 142, threonine 143, glycine 144, asparagine 204, and asparagine 226 each contribute to the GTP site. Position 69 (glutamate 69) interacts with Mg(2+).

Belongs to the tubulin family. As to quaternary structure, dimer of alpha and beta chains. A typical microtubule is a hollow water-filled tube with an outer diameter of 25 nm and an inner diameter of 15 nM. Alpha-beta heterodimers associate head-to-tail to form protofilaments running lengthwise along the microtubule wall with the beta-tubulin subunit facing the microtubule plus end conferring a structural polarity. Microtubules usually have 13 protofilaments but different protofilament numbers can be found in some organisms and specialized cells. It depends on Mg(2+) as a cofactor.

It localises to the cytoplasm. It is found in the cytoskeleton. Functionally, tubulin is the major constituent of microtubules, a cylinder consisting of laterally associated linear protofilaments composed of alpha- and beta-tubulin heterodimers. Microtubules grow by the addition of GTP-tubulin dimers to the microtubule end, where a stabilizing cap forms. Below the cap, tubulin dimers are in GDP-bound state, owing to GTPase activity of alpha-tubulin. In Phytophthora cinnamomi (Cinnamon fungus), this protein is Tubulin beta chain.